We begin with the raw amino-acid sequence, 312 residues long: Methionyl-tRNA formyltransferase (312 aa).

Ser-112–Pro-115 serves as a coordination point for (6S)-5,6,7,8-tetrahydrofolate.

This sequence belongs to the Fmt family.

It carries out the reaction L-methionyl-tRNA(fMet) + (6R)-10-formyltetrahydrofolate = N-formyl-L-methionyl-tRNA(fMet) + (6S)-5,6,7,8-tetrahydrofolate + H(+). Functionally, attaches a formyl group to the free amino group of methionyl-tRNA(fMet). The formyl group appears to play a dual role in the initiator identity of N-formylmethionyl-tRNA by promoting its recognition by IF2 and preventing the misappropriation of this tRNA by the elongation apparatus. This chain is Methionyl-tRNA formyltransferase, found in Magnetococcus marinus (strain ATCC BAA-1437 / JCM 17883 / MC-1).